The primary structure comprises 466 residues: ATP synthase subunit beta (466 aa).

156 to 163 (GGAGVGKT) is an ATP binding site.

Belongs to the ATPase alpha/beta chains family. F-type ATPases have 2 components, CF(1) - the catalytic core - and CF(0) - the membrane proton channel. CF(1) has five subunits: alpha(3), beta(3), gamma(1), delta(1), epsilon(1). CF(0) has three main subunits: a(1), b(2) and c(9-12). The alpha and beta chains form an alternating ring which encloses part of the gamma chain. CF(1) is attached to CF(0) by a central stalk formed by the gamma and epsilon chains, while a peripheral stalk is formed by the delta and b chains.

It localises to the cell membrane. It carries out the reaction ATP + H2O + 4 H(+)(in) = ADP + phosphate + 5 H(+)(out). In terms of biological role, produces ATP from ADP in the presence of a proton gradient across the membrane. The catalytic sites are hosted primarily by the beta subunits. This chain is ATP synthase subunit beta, found in Polynucleobacter asymbioticus (strain DSM 18221 / CIP 109841 / QLW-P1DMWA-1) (Polynucleobacter necessarius subsp. asymbioticus).